The chain runs to 652 residues: ATP-dependent zinc metalloprotease FtsH (652 aa).

At 1 to 11 the chain is on the cytoplasmic side; that stretch reads MKKQNNGLIKN. The chain crosses the membrane as a helical span at residues 12-32; that stretch reads PFLWLLFIFFLVTGFQYFYSG. The Extracellular segment spans residues 33-131; it reads NNSGGSQQIN…EVTVKHESSS (99 aa). A helical membrane pass occupies residues 132–152; sequence GIWINLLVSIVPFGILFFFLF. Residues 153–652 lie on the Cytoplasmic side of the membrane; that stretch reads SMMGNMGGGN…EVKSKMNDEK (500 aa). Position 227–234 (227–234) interacts with ATP; that stretch reads GPPGTGKT. H449 is a binding site for Zn(2+). E450 is a catalytic residue. The Zn(2+) site is built by H453 and D525. Residues 628–652 are disordered; the sequence is MPEAVEEESHALSYDEVKSKMNDEK. A compositionally biased stretch (basic and acidic residues) spans 634–652; the sequence is EESHALSYDEVKSKMNDEK.

The protein in the central section; belongs to the AAA ATPase family. This sequence in the C-terminal section; belongs to the peptidase M41 family. Homohexamer. It depends on Zn(2+) as a cofactor.

It is found in the cell membrane. In terms of biological role, acts as a processive, ATP-dependent zinc metallopeptidase for both cytoplasmic and membrane proteins. Plays a role in the quality control of integral membrane proteins. The chain is ATP-dependent zinc metalloprotease FtsH from Streptococcus pneumoniae serotype 4 (strain ATCC BAA-334 / TIGR4).